Reading from the N-terminus, the 105-residue chain is Large ribosomal subunit protein uL24 (105 aa).

The protein belongs to the universal ribosomal protein uL24 family. As to quaternary structure, part of the 50S ribosomal subunit.

Functionally, one of two assembly initiator proteins, it binds directly to the 5'-end of the 23S rRNA, where it nucleates assembly of the 50S subunit. One of the proteins that surrounds the polypeptide exit tunnel on the outside of the subunit. The sequence is that of Large ribosomal subunit protein uL24 from Mycolicibacterium smegmatis (strain ATCC 700084 / mc(2)155) (Mycobacterium smegmatis).